Reading from the N-terminus, the 232-residue chain is 2-C-methyl-D-erythritol 4-phosphate cytidylyltransferase (232 aa).

The protein belongs to the IspD/TarI cytidylyltransferase family. IspD subfamily.

The catalysed reaction is 2-C-methyl-D-erythritol 4-phosphate + CTP + H(+) = 4-CDP-2-C-methyl-D-erythritol + diphosphate. It participates in isoprenoid biosynthesis; isopentenyl diphosphate biosynthesis via DXP pathway; isopentenyl diphosphate from 1-deoxy-D-xylulose 5-phosphate: step 2/6. Catalyzes the formation of 4-diphosphocytidyl-2-C-methyl-D-erythritol from CTP and 2-C-methyl-D-erythritol 4-phosphate (MEP). In Stenotrophomonas maltophilia (strain R551-3), this protein is 2-C-methyl-D-erythritol 4-phosphate cytidylyltransferase.